A 274-amino-acid chain; its full sequence is 2,3,4,5-tetrahydropyridine-2,6-dicarboxylate N-succinyltransferase (274 aa).

The substrate site is built by arginine 104 and aspartate 141.

Belongs to the transferase hexapeptide repeat family. Homotrimer.

The protein resides in the cytoplasm. It carries out the reaction (S)-2,3,4,5-tetrahydrodipicolinate + succinyl-CoA + H2O = (S)-2-succinylamino-6-oxoheptanedioate + CoA. The protein operates within amino-acid biosynthesis; L-lysine biosynthesis via DAP pathway; LL-2,6-diaminopimelate from (S)-tetrahydrodipicolinate (succinylase route): step 1/3. The protein is 2,3,4,5-tetrahydropyridine-2,6-dicarboxylate N-succinyltransferase of Yersinia enterocolitica serotype O:8 / biotype 1B (strain NCTC 13174 / 8081).